A 476-amino-acid chain; its full sequence is MYPKIQHIHFVGIGGIGMSGIAEVLLTLGYRVSGSDLSENANIKRLRDKGAHIQQGHTAQAIEGADAVVTSSAVKRDNPEVMAARALRIPVVPRAEMLAELMRLKYGIAIAGTHGKTTTTSLVAALLGAADMDPTVVNGGIVKSLGSNAHVGQGAFLVTEADESDGSFLKLSPTIAVVTNMDPEHMNHYGTFDAVREAFRGFVSKIPFYGLAVLCGDHPEVSLLAEEMLDKRVITYGLSDQVDLQAVHIRQEGIVTHFEVIQHDRHHGRESRSLGTIQLNMPGCHNVSNTLAALAVAMELAVPWERCVRALAGFGGVQRRFDLLHQEAAITIIDDYAHHPVEIAATMEAVRNGYPQQRVVAVFQPHRYSRVLDHMHDFCRCFKNADVVLVDEIYRAGEQPPEGPLGEQGAIVLVEGIRRHSSAQVALLADDARWGLDLGGQLKPNDVVVFLGAGDISRRAHSFAAGWSQQTDPKTV.

112–118 (GTHGKTT) contacts ATP.

Belongs to the MurCDEF family.

The protein resides in the cytoplasm. The enzyme catalyses UDP-N-acetyl-alpha-D-muramate + L-alanine + ATP = UDP-N-acetyl-alpha-D-muramoyl-L-alanine + ADP + phosphate + H(+). It functions in the pathway cell wall biogenesis; peptidoglycan biosynthesis. In terms of biological role, cell wall formation. The protein is UDP-N-acetylmuramate--L-alanine ligase of Magnetococcus marinus (strain ATCC BAA-1437 / JCM 17883 / MC-1).